Consider the following 502-residue polypeptide: Lysine--tRNA ligase (502 aa).

Residues E398 and E405 each contribute to the Mg(2+) site.

It belongs to the class-II aminoacyl-tRNA synthetase family. In terms of assembly, homodimer. Requires Mg(2+) as cofactor.

It localises to the cytoplasm. It catalyses the reaction tRNA(Lys) + L-lysine + ATP = L-lysyl-tRNA(Lys) + AMP + diphosphate. This chain is Lysine--tRNA ligase (lysS), found in Thermotoga maritima (strain ATCC 43589 / DSM 3109 / JCM 10099 / NBRC 100826 / MSB8).